The sequence spans 196 residues: Small ribosomal subunit protein uS4c (196 aa).

The region spanning 89 to 150 (MRLDNIVFRL…NQRSKRLVQN (62 aa)) is the S4 RNA-binding domain.

This sequence belongs to the universal ribosomal protein uS4 family. In terms of assembly, part of the 30S ribosomal subunit. Contacts protein S5. The interaction surface between S4 and S5 is involved in control of translational fidelity.

The protein resides in the plastid. Its subcellular location is the chloroplast. In terms of biological role, one of the primary rRNA binding proteins, it binds directly to 16S rRNA where it nucleates assembly of the body of the 30S subunit. Its function is as follows. With S5 and S12 plays an important role in translational accuracy. This Eleusine indica (Goosegrass) protein is Small ribosomal subunit protein uS4c (rps4).